A 273-amino-acid chain; its full sequence is DNA replication complex GINS protein psf2 (273 aa).

Disordered regions lie at residues lysine 88 to glycine 110 and alanine 240 to leucine 273. Over residues alanine 244–glycine 257 the composition is skewed to basic and acidic residues. Positions glycine 261–leucine 273 are enriched in acidic residues.

This sequence belongs to the GINS2/PSF2 family. In terms of assembly, component of the GINS complex which is a heterotetramer of div-26/sld5, drc-1/psf1, drc-2/psf2 and drc-3/psf3.

The protein localises to the nucleus. Functionally, the GINS complex plays an essential role in the initiation of DNA replication. Has a role in chromosome segregation. In Neurospora crassa (strain ATCC 24698 / 74-OR23-1A / CBS 708.71 / DSM 1257 / FGSC 987), this protein is DNA replication complex GINS protein psf2 (drc-2).